The sequence spans 484 residues: tRNA sulfurtransferase (484 aa).

In terms of domain architecture, THUMP spans 63–167; the sequence is REMIERLTCT…LDRLFVIHRQ (105 aa). ATP is bound by residues 185-186, Lys-267, Gly-289, and Gln-298; that span reads LM. Cys-346 and Cys-457 are oxidised to a cystine. The Rhodanese domain maps to 405–483; it reads VLPGQIVIDI…GHTNVRVYRP (79 aa). Cys-457 functions as the Cysteine persulfide intermediate in the catalytic mechanism.

The protein belongs to the ThiI family.

It is found in the cytoplasm. It catalyses the reaction [ThiI sulfur-carrier protein]-S-sulfanyl-L-cysteine + a uridine in tRNA + 2 reduced [2Fe-2S]-[ferredoxin] + ATP + H(+) = [ThiI sulfur-carrier protein]-L-cysteine + a 4-thiouridine in tRNA + 2 oxidized [2Fe-2S]-[ferredoxin] + AMP + diphosphate. It carries out the reaction [ThiS sulfur-carrier protein]-C-terminal Gly-Gly-AMP + S-sulfanyl-L-cysteinyl-[cysteine desulfurase] + AH2 = [ThiS sulfur-carrier protein]-C-terminal-Gly-aminoethanethioate + L-cysteinyl-[cysteine desulfurase] + A + AMP + 2 H(+). It participates in cofactor biosynthesis; thiamine diphosphate biosynthesis. Functionally, catalyzes the ATP-dependent transfer of a sulfur to tRNA to produce 4-thiouridine in position 8 of tRNAs, which functions as a near-UV photosensor. Also catalyzes the transfer of sulfur to the sulfur carrier protein ThiS, forming ThiS-thiocarboxylate. This is a step in the synthesis of thiazole, in the thiamine biosynthesis pathway. The sulfur is donated as persulfide by IscS. This is tRNA sulfurtransferase from Pseudomonas aeruginosa (strain UCBPP-PA14).